The following is a 124-amino-acid chain: Holo-[acyl-carrier-protein] synthase (124 aa).

Residues aspartate 8 and glutamate 60 each contribute to the Mg(2+) site.

This sequence belongs to the P-Pant transferase superfamily. AcpS family. Mg(2+) serves as cofactor.

It localises to the cytoplasm. It carries out the reaction apo-[ACP] + CoA = holo-[ACP] + adenosine 3',5'-bisphosphate + H(+). Transfers the 4'-phosphopantetheine moiety from coenzyme A to a Ser of acyl-carrier-protein. The chain is Holo-[acyl-carrier-protein] synthase from Wolbachia pipientis subsp. Culex pipiens (strain wPip).